Consider the following 425-residue polypeptide: Histone-binding protein RBBP4 (425 aa).

Position 2 is an N-acetylalanine (Ala-2). WD repeat units follow at residues 32–125, 126–175, 176–223, 225–270, 271–314, 315–371, and 372–404; these read YDLV…NHEG, EVNR…RLRG, HQKE…KTIF, GHTA…HSVD, AHTA…HSFE, SHKD…FIHG, and GHTA…VWQM. The tract at residues 361-406 is interaction with HAT1; sequence DGPPELLFIHGGHTAKISDFSWNPNEPWVICSVSEDNIMQVWQMAE.

The protein belongs to the WD repeat RBAP46/RBAP48/MSI1 family. In terms of assembly, binds directly to histone H4, probably via helix 1 of the histone fold, a region that is not accessible when histone H4 is in chromatin. Interacts with CHAF1A, HDAC1, HDAC2, HDAC3 and HIRA. May also interact with HAT1.

Its subcellular location is the nucleus. The protein localises to the chromosome. It is found in the telomere. Core histone-binding subunit that may target chromatin assembly factors, chromatin remodeling factors and histone deacetylases to their histone substrates in a manner that is regulated by nucleosomal DNA. Component of several complexes which regulate chromatin metabolism. The polypeptide is Histone-binding protein RBBP4 (RBBP4) (Gallus gallus (Chicken)).